Consider the following 169-residue polypeptide: MTGSAPNPDADAVAWGDLLAGSYREIGERAMRDLPIYNDALGVEAVGFRAFNGTIVGIMVTPWFMNVVLPASAVAQATSGATARIRFPAGDIEFTISEVGQIGRIASCSLFSPMFQFADMDAARATAEAALAELMLPADSEEAVRRREPATTPIDRRNFLRGTLTERRG.

Belongs to the HupJ family.

The polypeptide is Hydrogenase expression/formation protein HupJ (hupJ) (Bradyrhizobium diazoefficiens (strain JCM 10833 / BCRC 13528 / IAM 13628 / NBRC 14792 / USDA 110)).